Here is a 149-residue protein sequence, read N- to C-terminus: Transcription antitermination protein NusB (149 aa).

The protein belongs to the NusB family.

Its function is as follows. Involved in transcription antitermination. Required for transcription of ribosomal RNA (rRNA) genes. Binds specifically to the boxA antiterminator sequence of the ribosomal RNA (rrn) operons. This chain is Transcription antitermination protein NusB, found in Acinetobacter baylyi (strain ATCC 33305 / BD413 / ADP1).